The primary structure comprises 257 residues: Glutamate racemase (257 aa).

Substrate contacts are provided by residues 12–13 and 44–45; these read DS and YG. The active-site Proton donor/acceptor is C75. 76–77 contacts substrate; sequence NT. C185 serves as the catalytic Proton donor/acceptor. A substrate-binding site is contributed by 186-187; the sequence is TH.

The protein belongs to the aspartate/glutamate racemases family.

The enzyme catalyses L-glutamate = D-glutamate. It participates in cell wall biogenesis; peptidoglycan biosynthesis. Its function is as follows. Provides the (R)-glutamate required for cell wall biosynthesis. This is Glutamate racemase from Clostridium botulinum (strain Okra / Type B1).